The sequence spans 104 residues: Large ribosomal subunit protein uL24 (104 aa).

This sequence belongs to the universal ribosomal protein uL24 family. Part of the 50S ribosomal subunit.

Its function is as follows. One of two assembly initiator proteins, it binds directly to the 5'-end of the 23S rRNA, where it nucleates assembly of the 50S subunit. In terms of biological role, one of the proteins that surrounds the polypeptide exit tunnel on the outside of the subunit. In Azotobacter vinelandii (strain DJ / ATCC BAA-1303), this protein is Large ribosomal subunit protein uL24.